Reading from the N-terminus, the 1181-residue chain is HEAT repeat-containing protein 6 (1181 aa).

One copy of the HEAT 1 repeat lies at 159 to 198 (PELLGNTGLLMKLSDLAQSDPEVRRAAVHCMANLCLSVPG). 2 disordered regions span residues 292 to 347 (QYDG…PVTG) and 371 to 390 (LDGS…SSSS). Over residues 300 to 312 (KPQQSESSASRPT) the composition is skewed to polar residues. Over residues 313–325 (LNKKKKSKVKPKK) the composition is skewed to basic residues. Residues Ser-336 and Ser-337 each carry the phosphoserine modification. Residues Ser-399 and Ser-402 each carry the phosphoserine modification. HEAT repeat units follow at residues 452 to 490 (ELGS…GSKQ), 515 to 552 (SIRE…NAPY), and 558 to 595 (SLLT…THAP). Residues 613 to 646 (NSNSATPHLSPPDWWKKAPAGPSLEETSVSSPKG) form a disordered region. Thr-618 bears the Phosphothreonine mark. The span at 637–646 (EETSVSSPKG) shows a compositional bias: polar residues. The residue at position 643 (Ser-643) is a Phosphoserine.

Amplified in breast cancer cell lines MCF-7 and BT-474.

Amplification-dependent oncogene. This Homo sapiens (Human) protein is HEAT repeat-containing protein 6 (HEATR6).